A 139-amino-acid polypeptide reads, in one-letter code: UPF0102 protein Caul_0175 (139 aa).

The protein belongs to the UPF0102 family.

The chain is UPF0102 protein Caul_0175 from Caulobacter sp. (strain K31).